The following is a 434-amino-acid chain: Putative ankyrin repeat protein FPV023 (434 aa).

ANK repeat units follow at residues 33–62 (RLKILLHKAIELRNIEAVRLLLNNDVDPVA), 134–163 (LTISRMEPSRQIEEIQIMDILLSKGIDINF), 167–197 (IGNTALHYACDYRNGLNMVRHLIKNGADINI), 201–230 (YGTTPLACAVSTRNIELVSILLDSGADPNS), 236–265 (IGTKVLHTAVGSGNFNIAKELIESGADPNI), 269–299 (AGVTPLHVAAIDEDSYALLELLLDNGADPNI), and 303–330 (NGTTPLFQAMHNYNRVKLLFMYGADINI).

The polypeptide is Putative ankyrin repeat protein FPV023 (Fowlpox virus (strain NVSL) (FPV)).